Reading from the N-terminus, the 152-residue chain is Superoxide dismutase [Cu-Zn] (152 aa).

Cu cation-binding residues include His-45, His-47, and His-62. Cysteines 56 and 145 form a disulfide. Residues His-62, His-70, His-79, and Asp-82 each coordinate Zn(2+). His-119 serves as a coordination point for Cu cation.

It belongs to the Cu-Zn superoxide dismutase family. As to quaternary structure, homodimer. Cu cation is required as a cofactor. The cofactor is Zn(2+).

It is found in the cytoplasm. The enzyme catalyses 2 superoxide + 2 H(+) = H2O2 + O2. Functionally, destroys radicals which are normally produced within the cells and which are toxic to biological systems. This Brassica oleracea var. capitata (Cabbage) protein is Superoxide dismutase [Cu-Zn] (SODCC).